The primary structure comprises 430 residues: tRNA(Ile)-lysidine synthase (430 aa).

ATP is bound at residue 21 to 26; sequence SGGLDS.

Belongs to the tRNA(Ile)-lysidine synthase family.

The protein localises to the cytoplasm. The enzyme catalyses cytidine(34) in tRNA(Ile2) + L-lysine + ATP = lysidine(34) in tRNA(Ile2) + AMP + diphosphate + H(+). Its function is as follows. Ligates lysine onto the cytidine present at position 34 of the AUA codon-specific tRNA(Ile) that contains the anticodon CAU, in an ATP-dependent manner. Cytidine is converted to lysidine, thus changing the amino acid specificity of the tRNA from methionine to isoleucine. The polypeptide is tRNA(Ile)-lysidine synthase (Salmonella typhi).